A 486-amino-acid polypeptide reads, in one-letter code: Glutamyl-tRNA(Gln) amidotransferase subunit A (486 aa).

Residues K79 and S154 each act as charge relay system in the active site. Residue S178 is the Acyl-ester intermediate of the active site.

This sequence belongs to the amidase family. GatA subfamily. As to quaternary structure, heterotrimer of A, B and C subunits.

The enzyme catalyses L-glutamyl-tRNA(Gln) + L-glutamine + ATP + H2O = L-glutaminyl-tRNA(Gln) + L-glutamate + ADP + phosphate + H(+). Allows the formation of correctly charged Gln-tRNA(Gln) through the transamidation of misacylated Glu-tRNA(Gln) in organisms which lack glutaminyl-tRNA synthetase. The reaction takes place in the presence of glutamine and ATP through an activated gamma-phospho-Glu-tRNA(Gln). This chain is Glutamyl-tRNA(Gln) amidotransferase subunit A, found in Dehalococcoides mccartyi (strain CBDB1).